A 751-amino-acid polypeptide reads, in one-letter code: Diamine oxidase [copper-containing] (751 aa).

The signal sequence occupies residues 1–19 (MPALGWAVAAILMLQTAMA). Asparagine 110 and asparagine 168 each carry an N-linked (GlcNAc...) asparagine glycan. The cysteines at positions 177 and 181 are disulfide-linked. Aspartate 373 (proton acceptor) is an active-site residue. Cysteine 391 and cysteine 417 form a disulfide bridge. The Schiff-base intermediate with substrate; via topaquinone role is filled by tyrosine 461. Tyrosine 461 is modified (2',4',5'-topaquinone). Cu(2+) contacts are provided by histidine 510 and histidine 512. Positions 519, 520, and 521 each coordinate Ca(2+). The N-linked (GlcNAc...) asparagine glycan is linked to asparagine 538. The Ca(2+) site is built by glutamate 562, phenylalanine 653, asparagine 656, glutamate 658, aspartate 664, and leucine 665. Position 675 (histidine 675) interacts with Cu(2+). An N-linked (GlcNAc...) asparagine glycan is attached at asparagine 745.

The protein belongs to the copper/topaquinone oxidase family. Homodimer; disulfide-linked. The cofactor is Cu(2+). Requires Ca(2+) as cofactor. L-topaquinone is required as a cofactor. N-glycosylated. In terms of processing, topaquinone (TPQ) is generated by copper-dependent autoxidation of a specific tyrosyl residue. In terms of tissue distribution, widely expressed with higher expression in placenta and kidney.

The protein resides in the secreted. It localises to the extracellular space. It is found in the cell membrane. The catalysed reaction is histamine + O2 + H2O = imidazole-4-acetaldehyde + H2O2 + NH4(+). The enzyme catalyses N(tau)-methylhistamine + O2 + H2O = 1-methylimidazole-4-acetaldehyde + H2O2 + NH4(+). It catalyses the reaction putrescine + O2 + H2O = 4-aminobutanal + H2O2 + NH4(+). It carries out the reaction cadaverine + O2 + H2O = 5-aminopentanal + H2O2 + NH4(+). With respect to regulation, inhibited by amiloride and amiloride analogs. Inhibited by isoniazid, cimetidine, clonidine, berenil and pentamidine. Its function is as follows. Catalyzes the oxidative deamination of primary amines to the corresponding aldehydes with the concomitant production of hydrogen peroxide and ammonia. Its preferred substrates are the diamines histamine and 1-methylhistamine and it could therefore play a role in allergic and immune responses. Has a broad specificity for diamines and can also act on cadaverine and putrescine, two products of amino acid catabolism. It could also act on polyamines, like spermidine and spermine though less efficiently, and regulate various biological processes. The polypeptide is Diamine oxidase [copper-containing] (Homo sapiens (Human)).